Consider the following 452-residue polypeptide: Na(+)/H(+) antiporter NhaA (452 aa).

The next 11 membrane-spanning stretches (helical) occupy residues phenylalanine 27–leucine 47, phenylalanine 67–methionine 87, alanine 108–phenylalanine 128, glycine 137–glycine 157, valine 166–phenylalanine 186, leucine 194–valine 214, serine 216–isoleucine 236, proline 314–serine 334, glycine 343–leucine 363, tryptophan 381–isoleucine 401, and valine 414–isoleucine 434.

It belongs to the NhaA Na(+)/H(+) (TC 2.A.33) antiporter family.

The protein localises to the cell inner membrane. It catalyses the reaction Na(+)(in) + 2 H(+)(out) = Na(+)(out) + 2 H(+)(in). In terms of biological role, na(+)/H(+) antiporter that extrudes sodium in exchange for external protons. The sequence is that of Na(+)/H(+) antiporter NhaA from Wolinella succinogenes (strain ATCC 29543 / DSM 1740 / CCUG 13145 / JCM 31913 / LMG 7466 / NCTC 11488 / FDC 602W) (Vibrio succinogenes).